Reading from the N-terminus, the 76-residue chain is Heat shock factor-binding protein 1 (76 aa).

It belongs to the HSBP1 family. Homohexamer. Associates with heptad repeats of HSF1 trimers and probably also HSF1 monomers, and with HSP70. Association with HSF1 trimers and HSP70 coincides with attenuation of heat shock response and the conversion of HSF1 trimer to monomer.

The protein resides in the nucleus. Functionally, negative regulator of the heat shock response. Negatively affects HSF1 DNA-binding activity. May have a role in the suppression of the activation of the stress response during the aging process. This Pongo abelii (Sumatran orangutan) protein is Heat shock factor-binding protein 1 (HSBP1).